We begin with the raw amino-acid sequence, 62 residues long: MKFLYGVILIALFLTVMTATLSEARCGPCFTTDPQTQAKCSECCGRKGGVCKGPQCICGIQY.

The signal sequence occupies residues 1–24 (MKFLYGVILIALFLTVMTATLSEA). 4 disulfides stabilise this stretch: C26-C43, C29-C51, C40-C56, and C44-C58. A propeptide is located at residue Y62.

This sequence belongs to the short scorpion toxin superfamily. Chloride channel inhibitor family. As to expression, expressed by the venom gland.

The protein localises to the secreted. Functionally, toxin with unknown function in healthy organisms. On glioma cells, interacts with chloride channels (probably ClC-3/CLCN3) and MMP2 at the surface of glioma cells. This complex is then internalized via caveolae, thus inhibiting the chloride channels necessary for cell shrinkage and tumor propagation. Induces flaccid paralysis in H.virescens larvae. Is not toxic to S.falculata larvae or mice. In Hottentotta tamulus (Eastern Indian scorpion), this protein is Lepidopteran-selective toxin.